We begin with the raw amino-acid sequence, 332 residues long: Putative symporter YfeH (332 aa).

Belongs to the bile acid:sodium symporter (BASS) (TC 2.A.28) family.

This chain is Putative symporter YfeH (yfeH), found in Escherichia coli (strain K12).